We begin with the raw amino-acid sequence, 292 residues long: D-tagatose-1,6-bisphosphate aldolase subunit KbaY (292 aa).

Residue D82 is the Proton donor of the active site. H83 and H180 together coordinate Zn(2+). Dihydroxyacetone phosphate is bound at residue G181. H208 lines the Zn(2+) pocket. Dihydroxyacetone phosphate contacts are provided by residues 209–211 and 230–233; these read GAS and NVAT.

Belongs to the class II fructose-bisphosphate aldolase family. TagBP aldolase KbaY subfamily. As to quaternary structure, homotetramer. Forms a complex with KbaZ. Requires Zn(2+) as cofactor.

It carries out the reaction D-tagatofuranose 1,6-bisphosphate = D-glyceraldehyde 3-phosphate + dihydroxyacetone phosphate. The protein operates within carbohydrate metabolism; D-tagatose 6-phosphate degradation; D-glyceraldehyde 3-phosphate and glycerone phosphate from D-tagatose 6-phosphate: step 2/2. In terms of biological role, catalytic subunit of the tagatose-1,6-bisphosphate aldolase KbaYZ, which catalyzes the reversible aldol condensation of dihydroxyacetone phosphate (DHAP or glycerone-phosphate) with glyceraldehyde 3-phosphate (G3P) to produce tagatose 1,6-bisphosphate (TBP). Requires KbaZ subunit for full activity and stability. The chain is D-tagatose-1,6-bisphosphate aldolase subunit KbaY from Enterobacter sp. (strain 638).